The following is a 672-amino-acid chain: Acetoacetyl-CoA synthetase (672 aa).

The protein belongs to the ATP-dependent AMP-binding enzyme family.

The protein resides in the cytoplasm. It localises to the cytosol. It carries out the reaction acetoacetate + ATP + CoA = acetoacetyl-CoA + AMP + diphosphate. In terms of biological role, converts acetoacetate to acetoacetyl-CoA in the cytosol. Ketone body-utilizing enzyme, responsible for the synthesis of cholesterol and fatty acids. In Macaca fascicularis (Crab-eating macaque), this protein is Acetoacetyl-CoA synthetase (AACS).